The chain runs to 258 residues: Alpha- and beta-fibrinogenase stejnefibrase-1 (258 aa).

An N-terminal signal peptide occupies residues 1–18 (MELIRVLANLLILQLSYA). The propeptide occupies 19–24 (QKSSEL). The region spanning 25 to 249 (IIGGDECNID…HLDWIQNIIA (225 aa)) is the Peptidase S1 domain. Disulfide bonds link cysteine 31–cysteine 163, cysteine 50–cysteine 66, cysteine 98–cysteine 256, cysteine 142–cysteine 210, cysteine 174–cysteine 189, and cysteine 200–cysteine 225. The active-site Charge relay system is the histidine 65. Asparagine 103 carries N-linked (GlcNAc...) asparagine glycosylation. Catalysis depends on aspartate 110, which acts as the Charge relay system. 4 N-linked (GlcNAc...) asparagine glycosylation sites follow: asparagine 121, asparagine 122, asparagine 154, and asparagine 170. Residue serine 204 is the Charge relay system of the active site.

The protein belongs to the peptidase S1 family. Snake venom subfamily. Monomer. As to expression, expressed by the venom gland.

It localises to the secreted. Its activity is inhibited by PMSF and p-nitrophenyl-p-guanidinobenzoate (NPGB). Functionally, snake venom serine protease. Degrades concomitantly alpha- (FGA) and beta-chains of fibrinogen (FGB). The polypeptide is Alpha- and beta-fibrinogenase stejnefibrase-1 (Trimeresurus stejnegeri (Chinese green tree viper)).